We begin with the raw amino-acid sequence, 344 residues long: Holliday junction branch migration complex subunit RuvB (344 aa).

Basic and acidic residues predominate over residues 1–25 (MTDSDPTLRPDRLPEDVQATDDRAL). The interval 1 to 33 (MTDSDPTLRPDRLPEDVQATDDRALRPQSLDDF) is disordered. The segment at 1–186 (MTDSDPTLRP…FGIPTRLNFY (186 aa)) is large ATPase domain (RuvB-L). ATP is bound by residues L25, R26, G67, K70, T71, T72, 133–135 (EDF), R176, Y186, and R223. A Mg(2+)-binding site is contributed by T71. Positions 187 to 257 (TIAELDQIVA…IADSALTRLG (71 aa)) are small ATPAse domain (RuvB-S). The interval 260–344 (DLGLDGADRR…PKRPDQGELI (85 aa)) is head domain (RuvB-H). Positions 296, 315, and 320 each coordinate DNA.

This sequence belongs to the RuvB family. As to quaternary structure, homohexamer. Forms an RuvA(8)-RuvB(12)-Holliday junction (HJ) complex. HJ DNA is sandwiched between 2 RuvA tetramers; dsDNA enters through RuvA and exits via RuvB. An RuvB hexamer assembles on each DNA strand where it exits the tetramer. Each RuvB hexamer is contacted by two RuvA subunits (via domain III) on 2 adjacent RuvB subunits; this complex drives branch migration. In the full resolvosome a probable DNA-RuvA(4)-RuvB(12)-RuvC(2) complex forms which resolves the HJ.

The protein localises to the cytoplasm. It catalyses the reaction ATP + H2O = ADP + phosphate + H(+). The RuvA-RuvB-RuvC complex processes Holliday junction (HJ) DNA during genetic recombination and DNA repair, while the RuvA-RuvB complex plays an important role in the rescue of blocked DNA replication forks via replication fork reversal (RFR). RuvA specifically binds to HJ cruciform DNA, conferring on it an open structure. The RuvB hexamer acts as an ATP-dependent pump, pulling dsDNA into and through the RuvAB complex. RuvB forms 2 homohexamers on either side of HJ DNA bound by 1 or 2 RuvA tetramers; 4 subunits per hexamer contact DNA at a time. Coordinated motions by a converter formed by DNA-disengaged RuvB subunits stimulates ATP hydrolysis and nucleotide exchange. Immobilization of the converter enables RuvB to convert the ATP-contained energy into a lever motion, pulling 2 nucleotides of DNA out of the RuvA tetramer per ATP hydrolyzed, thus driving DNA branch migration. The RuvB motors rotate together with the DNA substrate, which together with the progressing nucleotide cycle form the mechanistic basis for DNA recombination by continuous HJ branch migration. Branch migration allows RuvC to scan DNA until it finds its consensus sequence, where it cleaves and resolves cruciform DNA. The polypeptide is Holliday junction branch migration complex subunit RuvB (Jannaschia sp. (strain CCS1)).